Consider the following 335-residue polypeptide: Phospho-N-acetylmuramoyl-pentapeptide-transferase (335 aa).

9 consecutive transmembrane segments (helical) span residues 2-22 (PPLFCVLKAFFIGLVVSLILV), 55-75 (IPTAGGIIFVLSVVLSILLLL), 77-97 (CNLWSTWFLVGATLLWGALGW), 118-137 (FFIQNCLAIGTVLPIMIAYG), 153-173 (LPHCWLGYLFSFSIAVLAIVG), 193-213 (VIACLGMLIVTFAYGAPWAFI), 238-258 (IFMGDTGSLFLGGMLGICAVL), 263-283 (FMLLFMGGIFVLESLSVILQV), and 313-333 (VVRNFWIIEFLCVAIGIFAVF).

The protein belongs to the glycosyltransferase 4 family. MraY subfamily. Requires Mg(2+) as cofactor.

It is found in the cell inner membrane. The catalysed reaction is UDP-N-acetyl-alpha-D-muramoyl-L-alanyl-gamma-D-glutamyl-meso-2,6-diaminopimeloyl-D-alanyl-D-alanine + di-trans,octa-cis-undecaprenyl phosphate = di-trans,octa-cis-undecaprenyl diphospho-N-acetyl-alpha-D-muramoyl-L-alanyl-D-glutamyl-meso-2,6-diaminopimeloyl-D-alanyl-D-alanine + UMP. The protein operates within cell wall biogenesis; peptidoglycan biosynthesis. Functionally, catalyzes the initial step of the lipid cycle reactions in the biosynthesis of the cell wall peptidoglycan: transfers peptidoglycan precursor phospho-MurNAc-pentapeptide from UDP-MurNAc-pentapeptide onto the lipid carrier undecaprenyl phosphate, yielding undecaprenyl-pyrophosphoryl-MurNAc-pentapeptide, known as lipid I. The protein is Phospho-N-acetylmuramoyl-pentapeptide-transferase of Chlamydia muridarum (strain MoPn / Nigg).